A 141-amino-acid chain; its full sequence is MAKKLVGSMKLQVPAGQANPSPPVGPALGQRGINIMEFCKAFNAKTADMEQGAPCPTVITYYQDKSFTMDIKTPPASYYLKKAAKLSSGAKTPSREVVGYVSSKQVREIAEAKMKDLNATSIEAAMKIILGSARSMGIEVK.

This sequence belongs to the universal ribosomal protein uL11 family. In terms of assembly, part of the ribosomal stalk of the 50S ribosomal subunit. Interacts with L10 and the large rRNA to form the base of the stalk. L10 forms an elongated spine to which L12 dimers bind in a sequential fashion forming a multimeric L10(L12)X complex. Post-translationally, one or more lysine residues are methylated.

In terms of biological role, forms part of the ribosomal stalk which helps the ribosome interact with GTP-bound translation factors. The chain is Large ribosomal subunit protein uL11 from Roseobacter denitrificans (strain ATCC 33942 / OCh 114) (Erythrobacter sp. (strain OCh 114)).